Consider the following 394-residue polypeptide: Chalcone synthase 4 (394 aa).

Cysteine 165 is an active-site residue.

It belongs to the thiolase-like superfamily. Chalcone/stilbene synthases family.

It carries out the reaction (E)-4-coumaroyl-CoA + 3 malonyl-CoA + 3 H(+) = 2',4,4',6'-tetrahydroxychalcone + 3 CO2 + 4 CoA. The protein operates within secondary metabolite biosynthesis; flavonoid biosynthesis. Its function is as follows. The primary product of this enzyme is 4,2',4',6'-tetrahydroxychalcone (also termed naringenin-chalcone or chalcone) which can under specific conditions spontaneously isomerize into naringenin. This is Chalcone synthase 4 (CHS4) from Bromheadia finlaysoniana (Orchid).